Reading from the N-terminus, the 104-residue chain is MAAKIKKGDTVVVLTGRDAGRSGEVIQVMPKEDKAFVRGVNLVKKHQRQTQNQEGGIISKEAAIQLSNIAVADANGKPTRVGFRILDDGRKVRFAKTTGDQIDG.

It belongs to the universal ribosomal protein uL24 family. As to quaternary structure, part of the 50S ribosomal subunit.

In terms of biological role, one of two assembly initiator proteins, it binds directly to the 5'-end of the 23S rRNA, where it nucleates assembly of the 50S subunit. Its function is as follows. One of the proteins that surrounds the polypeptide exit tunnel on the outside of the subunit. The chain is Large ribosomal subunit protein uL24 from Methylorubrum extorquens (strain PA1) (Methylobacterium extorquens).